We begin with the raw amino-acid sequence, 186 residues long: Nicotinamide-nucleotide adenylyltransferase (186 aa).

It belongs to the archaeal NMN adenylyltransferase family.

It is found in the cytoplasm. It carries out the reaction beta-nicotinamide D-ribonucleotide + ATP + H(+) = diphosphate + NAD(+). Its pathway is cofactor biosynthesis; NAD(+) biosynthesis; NAD(+) from nicotinamide D-ribonucleotide: step 1/1. This chain is Nicotinamide-nucleotide adenylyltransferase, found in Pyrococcus abyssi (strain GE5 / Orsay).